Consider the following 35-residue polypeptide: UPF0387 membrane protein YohO (35 aa).

A helical membrane pass occupies residues 6–26; sequence IGVIALFLLMAIGGIGGVMLA.

Belongs to the UPF0387 family.

It localises to the cell inner membrane. In Salmonella paratyphi A (strain ATCC 9150 / SARB42), this protein is UPF0387 membrane protein YohO.